Consider the following 92-residue polypeptide: DNA-directed RNA polymerase subunit omega (92 aa).

It belongs to the RNA polymerase subunit omega family. The RNAP catalytic core consists of 2 alpha, 1 beta, 1 beta' and 1 omega subunit. When a sigma factor is associated with the core the holoenzyme is formed, which can initiate transcription.

The enzyme catalyses RNA(n) + a ribonucleoside 5'-triphosphate = RNA(n+1) + diphosphate. Functionally, promotes RNA polymerase assembly. Latches the N- and C-terminal regions of the beta' subunit thereby facilitating its interaction with the beta and alpha subunits. This chain is DNA-directed RNA polymerase subunit omega, found in Corynebacterium diphtheriae (strain ATCC 700971 / NCTC 13129 / Biotype gravis).